A 198-amino-acid chain; its full sequence is Transcription factor FapR (198 aa).

Residues 102-167 form the MaoC-like domain; sequence TRIARGHHLF…HGRTIVEVNS (66 aa).

It belongs to the FapR family.

Its function is as follows. Transcriptional factor involved in regulation of membrane lipid biosynthesis by repressing genes involved in fatty acid and phospholipid metabolism. The protein is Transcription factor FapR of Geobacillus kaustophilus (strain HTA426).